A 32-amino-acid chain; its full sequence is Beta-1,4-galactosyltransferase 1 (32 aa).

The protein belongs to the glycosyltransferase 7 family. The cofactor is Mn(2+). The soluble form derives from the membrane form by proteolytic processing.

The protein localises to the golgi apparatus. It localises to the golgi stack membrane. The protein resides in the secreted. It is found in the cell membrane. Its subcellular location is the cell projection. The protein localises to the filopodium. It carries out the reaction D-glucose + UDP-alpha-D-galactose = lactose + UDP + H(+). The enzyme catalyses an N-acetyl-beta-D-glucosaminyl derivative + UDP-alpha-D-galactose = a beta-D-galactosyl-(1-&gt;4)-N-acetyl-beta-D-glucosaminyl derivative + UDP + H(+). The catalysed reaction is N-acetyl-D-glucosamine + UDP-alpha-D-galactose = beta-D-galactosyl-(1-&gt;4)-N-acetyl-D-glucosamine + UDP + H(+). It catalyses the reaction a beta-D-GlcNAc-(1-&gt;3)-beta-D-Gal-(1-&gt;4)-beta-D-Glc-(1&lt;-&gt;1)-Cer(d18:1(4E)) + UDP-alpha-D-galactose = a neolactoside nLc4Cer(d18:1(4E)) + UDP + H(+). It carries out the reaction a beta-D-glucosylceramide + UDP-alpha-D-galactose = a beta-D-galactosyl-(1-&gt;4)-beta-D-glucosyl-(1&lt;-&gt;1)-ceramide + UDP + H(+). The enzyme catalyses a neolactoside IV(3)-beta-GlcNAc-nLc4Cer + UDP-alpha-D-galactose = a neolactoside nLc6Cer + UDP + H(+). It functions in the pathway protein modification; protein glycosylation. In terms of biological role, this protein is responsible for the synthesis of complex-type N-linked oligosaccharides in many glycoproteins as well as the carbohydrate moieties of glycolipids. The chain is Beta-1,4-galactosyltransferase 1 from Rattus norvegicus (Rat).